We begin with the raw amino-acid sequence, 354 residues long: Fe(3+) ions import ATP-binding protein FbpC (354 aa).

In terms of domain architecture, ABC transporter spans 4–236 (LELHAVHKSF…PRDAQTALFL (233 aa)). 36 to 43 (GPSGSGKT) lines the ATP pocket.

The protein belongs to the ABC transporter superfamily. Fe(3+) ion importer (TC 3.A.1.10) family. In terms of assembly, the complex is composed of two ATP-binding proteins (FbpC), two transmembrane proteins (FbpB) and a solute-binding protein (FbpA).

It is found in the cell inner membrane. It carries out the reaction Fe(3+)(out) + ATP + H2O = Fe(3+)(in) + ADP + phosphate + H(+). In terms of biological role, part of the ABC transporter complex FbpABC involved in Fe(3+) ions import. Responsible for energy coupling to the transport system. The protein is Fe(3+) ions import ATP-binding protein FbpC of Pseudomonas fluorescens (strain ATCC BAA-477 / NRRL B-23932 / Pf-5).